Here is a 1027-residue protein sequence, read N- to C-terminus: Presequence protease, mitochondrial (1027 aa).

The transit peptide at M1–W22 directs the protein to the mitochondrion. H98 is a Zn(2+) binding site. The active-site Proton acceptor is the E101. Residues H102 and E199 each coordinate Zn(2+). C113 and C550 are joined by a disulfide. Residues R803–T827 are disordered. Low complexity predominate over residues S814–S825.

This sequence belongs to the peptidase M16 family. PreP subfamily. As to quaternary structure, monomer and homodimer; homodimerization is induced by binding of the substrate. Zn(2+) serves as cofactor. In terms of processing, a disulfide bond locks the enzyme in the closed conformation preventing substrate entry into the catalytic chamber.

Its subcellular location is the mitochondrion matrix. With respect to regulation, mainly exists in a closed and catalytically competent conformation but a closed-to-open switch allows substrate entry into the catalytic chamber. Substrate binding induces closure and dimerization. A disulfide bond may lock the enzyme in a closed conformation preventing substrate entry into the catalytic chamber, participating in redox regulation of the enzyme. Inhibited by metal-chelating agents. Inhibited by nickel and zinc excess, and slightly activated by manganese. Metalloendopeptidase of the mitochondrial matrix that functions in peptide cleavage and degradation rather than in protein processing. Has an ATP-independent activity. Specifically cleaves peptides in the range of 5 to 65 residues. Shows a preference for cleavage after small polar residues and before basic residues, but without any positional preference. Degrades the transit peptides of mitochondrial proteins after their cleavage. Also degrades other unstructured peptides. This Xenopus laevis (African clawed frog) protein is Presequence protease, mitochondrial (pitrm1).